We begin with the raw amino-acid sequence, 449 residues long: C4-dicarboxylate transport protein 1 (449 aa).

A run of 9 helical transmembrane segments spans residues 14–34 (SIFLQVVIGLVIGVICGVGIP), 47–67 (FIKLIKMLIALIVFCVVVNGI), 83–103 (SVIYFEILTTIALVLGLVVAY), 157–177 (ILQVLLFSVLFGSALNLVGEQ), 195–215 (IMGMIVRLAPLGVFGAVAFTT), 226–246 (LGALVLVFYATCLVFVMAVLG), 312–332 (FSIYLTLAVVFIAHVTGTPLA), 359–379 (VILAATLTAVPAIPVAGLVLV), and 385–405 (FMGIGRALTNLIGNCVATVTI).

It belongs to the dicarboxylate/amino acid:cation symporter (DAACS) (TC 2.A.23) family.

Its subcellular location is the cell inner membrane. Responsible for the transport of dicarboxylates such as succinate, fumarate, and malate from the periplasm across the membrane. In Pseudomonas aeruginosa (strain UCBPP-PA14), this protein is C4-dicarboxylate transport protein 1.